Consider the following 799-residue polypeptide: DNA ligase (799 aa).

The segment covering 1–11 (MTEVKTGRVVD) has biased composition (basic and acidic residues). The interval 1-35 (MTEVKTGRVVDDAPVNDAPENNAAEATSPARHDAI) is disordered. Residues 67–71 (DAEYD), 116–117 (SL), and aspartate 147 each bind NAD(+). Lysine 149 serves as the catalytic N6-AMP-lysine intermediate. Residues arginine 170, glutamate 207, lysine 327, and lysine 351 each contribute to the NAD(+) site. Zn(2+)-binding residues include cysteine 445, cysteine 448, cysteine 463, and cysteine 468. Residues 634 to 723 (AIVLPLQGLK…VASVDASEAV (90 aa)) enclose the BRCT domain. Residues 720 to 799 (SEAVAEETPP…RGRAEQLKLF (80 aa)) form a disordered region. Over residues 755-767 (GSASGDDSRGAAA) the composition is skewed to low complexity. The segment covering 787–799 (DVPRGRAEQLKLF) has biased composition (basic and acidic residues).

The protein belongs to the NAD-dependent DNA ligase family. LigA subfamily. It depends on Mg(2+) as a cofactor. Requires Mn(2+) as cofactor.

The enzyme catalyses NAD(+) + (deoxyribonucleotide)n-3'-hydroxyl + 5'-phospho-(deoxyribonucleotide)m = (deoxyribonucleotide)n+m + AMP + beta-nicotinamide D-nucleotide.. Functionally, DNA ligase that catalyzes the formation of phosphodiester linkages between 5'-phosphoryl and 3'-hydroxyl groups in double-stranded DNA using NAD as a coenzyme and as the energy source for the reaction. It is essential for DNA replication and repair of damaged DNA. The chain is DNA ligase from Nitratidesulfovibrio vulgaris (strain ATCC 29579 / DSM 644 / CCUG 34227 / NCIMB 8303 / VKM B-1760 / Hildenborough) (Desulfovibrio vulgaris).